Here is a 733-residue protein sequence, read N- to C-terminus: MPIVPEILREVALTEEEYARAVALLGREPNLIELGMIGALWSEHCGYKHSRPLLRKLPTSGPHVVQGPGENAGAVELGDGLVVVLKIESHNHPSAVEPFQGAATGVGGIVRDIFAMGARPIALADSLRFGPLEEPRQQYLFHGVVGGIGWYGNCLGIPTVAGDVFFAPEYRQNPLVNAMCVGIAERSALIRARATGPGNLVVLVGADTGRDGIHGATFASVEDPERSHRGVVQVGNPFLEKLLLEACLEVLETGAVVAMQDLGAAGLTSASAEIAARGGTGIELDVALVPRRETGMTPYEVMLSESQERMLLVVDPEGIDRVLAIFRRWELHAVVIGRVTDDGLLRVLEDGQVVAELPVWLLTDACPTYVREAREAGEIRERRAFDPDALPDLQPAEVAEMLAALLRSPNIASRRPIYRTYDHTILTNTVLPPGAADAAVLRIKGQRFGIALKTDCNPRYCLLDPRLGTMHAVAEAARNVSCVGAEPLAITDCLNFGNPERPEIYYQLVQAIEGMAEACTVLGIPVVSGNVSLYNETEGRSIPPTPVVGIVGRLADVRRCVGMGFRGEGKVFLLGSELATLGGSEFLAQRHGLVAGAPPPLDLELERRVQACVREGIARGIVLAAHDCSEGGLLIALAESCMVGRIGGRFTTESLIAANGRLDRALFGESASRVIVQVAEGAEGALLGLARAHGVPVQELGRTGGDRFVVGELVDQPLSELIELWTTGLVESA.

Histidine 44 is an active-site residue. Residues tyrosine 47 and lysine 86 each contribute to the ATP site. Glutamate 88 serves as a coordination point for Mg(2+). Residues 89–92 (SHNH) and arginine 111 contribute to the substrate site. Histidine 90 serves as the catalytic Proton acceptor. Aspartate 112 contacts Mg(2+). Residue glutamine 233 participates in substrate binding. Aspartate 261 is a Mg(2+) binding site. 305-307 (ESQ) is a substrate binding site. Positions 492 and 529 each coordinate ATP. Residue asparagine 530 participates in Mg(2+) binding. Serine 532 serves as a coordination point for substrate.

Belongs to the FGAMS family. As to quaternary structure, monomer. Part of the FGAM synthase complex composed of 1 PurL, 1 PurQ and 2 PurS subunits.

The protein resides in the cytoplasm. The catalysed reaction is N(2)-formyl-N(1)-(5-phospho-beta-D-ribosyl)glycinamide + L-glutamine + ATP + H2O = 2-formamido-N(1)-(5-O-phospho-beta-D-ribosyl)acetamidine + L-glutamate + ADP + phosphate + H(+). It participates in purine metabolism; IMP biosynthesis via de novo pathway; 5-amino-1-(5-phospho-D-ribosyl)imidazole from N(2)-formyl-N(1)-(5-phospho-D-ribosyl)glycinamide: step 1/2. Functionally, part of the phosphoribosylformylglycinamidine synthase complex involved in the purines biosynthetic pathway. Catalyzes the ATP-dependent conversion of formylglycinamide ribonucleotide (FGAR) and glutamine to yield formylglycinamidine ribonucleotide (FGAM) and glutamate. The FGAM synthase complex is composed of three subunits. PurQ produces an ammonia molecule by converting glutamine to glutamate. PurL transfers the ammonia molecule to FGAR to form FGAM in an ATP-dependent manner. PurS interacts with PurQ and PurL and is thought to assist in the transfer of the ammonia molecule from PurQ to PurL. The sequence is that of Phosphoribosylformylglycinamidine synthase subunit PurL from Thermomicrobium roseum (strain ATCC 27502 / DSM 5159 / P-2).